Consider the following 729-residue polypeptide: Fatty acid oxidation complex subunit alpha (729 aa).

The interval 1–189 is enoyl-CoA hydratase/isomerase; it reads MLYQSETLQL…KVGLVDAVVA (189 aa). Substrate is bound at residue D296. Residues 311-729 form a 3-hydroxyacyl-CoA dehydrogenase region; the sequence is SAPKQAAVLG…LLDVSISQPA (419 aa). NAD(+) is bound by residues M324, D343, 400–402, K407, and S429; that span reads VVE. H450 acts as the For 3-hydroxyacyl-CoA dehydrogenase activity in catalysis. N453 provides a ligand contact to NAD(+). 2 residues coordinate substrate: N500 and Y660.

In the N-terminal section; belongs to the enoyl-CoA hydratase/isomerase family. It in the C-terminal section; belongs to the 3-hydroxyacyl-CoA dehydrogenase family. Heterotetramer of two alpha chains (FadB) and two beta chains (FadA).

The catalysed reaction is a (3S)-3-hydroxyacyl-CoA + NAD(+) = a 3-oxoacyl-CoA + NADH + H(+). It carries out the reaction a (3S)-3-hydroxyacyl-CoA = a (2E)-enoyl-CoA + H2O. It catalyses the reaction a 4-saturated-(3S)-3-hydroxyacyl-CoA = a (3E)-enoyl-CoA + H2O. The enzyme catalyses (3S)-3-hydroxybutanoyl-CoA = (3R)-3-hydroxybutanoyl-CoA. The catalysed reaction is a (3Z)-enoyl-CoA = a 4-saturated (2E)-enoyl-CoA. It carries out the reaction a (3E)-enoyl-CoA = a 4-saturated (2E)-enoyl-CoA. Its pathway is lipid metabolism; fatty acid beta-oxidation. Its function is as follows. Involved in the aerobic and anaerobic degradation of long-chain fatty acids via beta-oxidation cycle. Catalyzes the formation of 3-oxoacyl-CoA from enoyl-CoA via L-3-hydroxyacyl-CoA. It can also use D-3-hydroxyacyl-CoA and cis-3-enoyl-CoA as substrate. The protein is Fatty acid oxidation complex subunit alpha of Yersinia enterocolitica serotype O:8 / biotype 1B (strain NCTC 13174 / 8081).